The sequence spans 3685 residues: Dystrophin (3685 aa).

Positions 1 to 240 (MLWWEEVEDC…YITSLFQVLP (240 aa)) are actin-binding. 2 consecutive Calponin-homology (CH) domains span residues 15-119 (DVQK…LHWQ) and 134-240 (TNSE…QVLP). The segment at 63 to 72 (PKEKGSTRVH) is ANK2- and ANK-3 binding. 24 Spectrin repeats span residues 339 to 447 (VNLD…NLHR), 448 to 556 (VLMD…LLQD), 559 to 667 (LKWQ…QISQ), 719 to 828 (EIRK…WLEY), 830 to 934 (NNII…ELQT), 943 to 1045 (RYQE…KLEE), 1048 to 1154 (NKLR…ALKG), 1157 to 1263 (EKTV…TLEE), 1266 to 1367 (ACWH…LLEQ), 1368 to 1463 (SIQS…LFQK), 1468 to 1568 (EQRL…QLEK), 1571 to 1676 (KLSR…LLLE), 1679 to 1778 (KHME…KASI), 1779 to 1874 (PLKE…KALE), 1877 to 1979 (HQWY…TVRE), 1992 to 2101 (EISY…RFDR), 2104 to 2208 (EKWR…RLEE), 2211 to 2318 (NILS…EIEA), 2319 to 2423 (QIKD…LRAK), 2475 to 2577 (FNRA…QLNE), 2580 to 2686 (KDST…ALEE), 2689 to 2802 (RLLQ…HLEA), 2808 to 2930 (KRLH…RKID), and 2935 to 3040 (RLRE…QLHE). Asn340 carries the phosphothreonine modification. Phosphoserine is present on residues Tyr344 and Leu348. A phosphothreonine mark is found at Glu519, Ser616, and Ser629. An interaction with SYNM region spans residues 1415 to 1913 (SDLTSHEISL…PEPRDERKIK (499 aa)). Residues 3055–3088 (TSVQGPWERAISPNKVPYYINHETQTTCWDHPKM) form the WW domain. The interaction with SYNM stretch occupies residues 3058-3408 (QGPWERAISP…TVLEGDNMET (351 aa)). The ZZ-type; degenerate zinc-finger motif lies at 3308–3364 (KHQAKCNICKECPIIGFRYRSLKHFNYDICQSCFFSGRVAKGHKMHYPMVEYCTPTT). Residues Cys3313, Cys3316, Cys3337, and Cys3340 each contribute to the Zn(2+) site. Residues 3466-3518 (DDEHLLIQHYCQSLNQDSPLSQPRSPAQILISLESEERGELERILADLEEENR) are binds to SNTB1. 3 positions are modified to phosphoserine: Ser3483, Ser3490, and Ser3500. Disordered stretches follow at residues 3528–3554 (KQQH…QSPR) and 3603–3685 (EAKV…EDTM). Polar residues-rich tracts occupy residues 3607 to 3626 (NGTT…SSQP) and 3662 to 3673 (QLNNSFPSSRGR). Residues Ser3612, Ser3613, Ser3617, Ser3623, Ser3624, and Ser3666 each carry the phosphoserine modification.

Interacts with SYNM. Interacts with the syntrophins SNTA1, SNTB1, SNTB2, SNTG1 and SNTG2. Interacts with KRT19. Component of the dystrophin-associated glycoprotein complex which is composed of three subcomplexes: a cytoplasmic complex comprised of DMD (or UTRN), DTNA and a number of syntrophins, such as SNTB1, SNTB2, SNTG1 and SNTG2, the transmembrane dystroglycan complex, and the sarcoglycan-sarcospan complex. Interacts with DAG1 (betaDAG1) with DMD; the interaction is inhibited by phosphorylation on the PPXY motif of DAG1. Interacts with CMYA5. Directly interacts with ANK2 and ANK3; these interactions do not interfere with betaDAG1-binding and are necessary for proper localization in muscle cells. Identified in a dystroglycan complex that contains at least PRX, DRP2, UTRN, DMD and DAG1. Interacts with DTNB. Interacts with PGM5; the interaction is direct. Interacts with NOS1; localizes NOS1 to sarcolemma in muscle cells. Expressed in muscle fibers accumulating in the costameres of myoplasm at the sarcolemma. Expressed in brain, muscle, kidney, lung and testis. Most tissues contain transcripts of multiple isoforms. Isoform 15: Only isoform to be detected in heart and liver and is also expressed in brain, testis and hepatoma cells.

It is found in the cell membrane. Its subcellular location is the sarcolemma. It localises to the cytoplasm. The protein localises to the cytoskeleton. The protein resides in the postsynaptic cell membrane. Functionally, anchors the extracellular matrix to the cytoskeleton via F-actin. Ligand for dystroglycan. Component of the dystrophin-associated glycoprotein complex which accumulates at the neuromuscular junction (NMJ) and at a variety of synapses in the peripheral and central nervous systems and has a structural function in stabilizing the sarcolemma. Also implicated in signaling events and synaptic transmission. This chain is Dystrophin, found in Homo sapiens (Human).